We begin with the raw amino-acid sequence, 223 residues long: Adenylate kinase 4, mitochondrial (223 aa).

Residue 15–20 (GSGKGT) participates in a ribonucleoside 5'-triphosphate binding. Residues 35–64 (SSGHFLRENIKASTEVGEMAKQYIEKSLLV) form an NMP region. AMP is bound by residues Ser36 and Arg41. The residue at position 60 (Lys60) is an N6-succinyllysine. AMP is bound by residues 62–64 (LLV), 89–92 (GFPR), and Gln96. The segment at 125-162 (RRWIHPPSGRVYNLDFNPPHVHGIDDVTGEPLVQQEDD) is LID. A ribonucleoside 5'-triphosphate is bound by residues Arg126 and 135–136 (VY). Position 170 (Arg170) interacts with AMP. An N6-acetyllysine modification is found at Lys175. N6-acetyllysine; alternate is present on residues Lys179 and Lys186. N6-succinyllysine; alternate occurs at positions 179 and 186. Position 199 (Thr199) interacts with a ribonucleoside 5'-triphosphate.

This sequence belongs to the adenylate kinase family. AK3 subfamily. As to quaternary structure, monomer. Interacts with SLC25A5/ANT2. Highly expressed in kidney, moderately expressed in heart and liver and weakly expressed in brain.

Its subcellular location is the mitochondrion matrix. It carries out the reaction a ribonucleoside 5'-phosphate + ATP = a ribonucleoside 5'-diphosphate + ADP. It catalyses the reaction AMP + ATP = 2 ADP. The enzyme catalyses GTP + AMP = GDP + ADP. The catalysed reaction is CMP + ATP = CDP + ADP. It carries out the reaction GTP + CMP = CDP + GDP. It catalyses the reaction dAMP + ATP = dADP + ADP. The enzyme catalyses dCMP + ATP = dCDP + ADP. The catalysed reaction is a 2'-deoxyribonucleoside 5'-diphosphate + ATP = a 2'-deoxyribonucleoside 5'-triphosphate + ADP. It carries out the reaction a ribonucleoside 5'-diphosphate + ATP = a ribonucleoside 5'-triphosphate + ADP. It catalyses the reaction GDP + ATP = GTP + ADP. The enzyme catalyses CDP + GTP = CTP + GDP. The catalysed reaction is CDP + ATP = CTP + ADP. It carries out the reaction UDP + ATP = UTP + ADP. It catalyses the reaction GTP + UDP = UTP + GDP. The enzyme catalyses dADP + GTP = dATP + GDP. The catalysed reaction is dCDP + GTP = dCTP + GDP. It carries out the reaction dCDP + ATP = dCTP + ADP. It catalyses the reaction dGDP + ATP = dGTP + ADP. The enzyme catalyses dTDP + GTP = dTTP + GDP. The catalysed reaction is dTDP + ATP = dTTP + ADP. In terms of biological role, broad-specificity mitochondrial nucleoside phosphate kinase involved in cellular nucleotide homeostasis by catalyzing nucleoside-phosphate interconversions. Similar to other adenylate kinases, preferentially catalyzes the phosphorylation of the nucleoside monophosphate AMP with ATP as phosphate donor to produce ADP. Phosphorylates only AMP when using GTP as phosphate donor. In vitro, can also catalyze the phosphorylation of CMP, dAMP and dCMP and use GTP as an alternate phosphate donor. Moreover, exhibits a diphosphate kinase activity, producing ATP, CTP, GTP, UTP, TTP, dATP, dCTP and dGTP from the corresponding diphosphate substrates with either ATP or GTP as phosphate donors. Plays a role in controlling cellular ATP levels by regulating phosphorylation and activation of the energy sensor protein kinase AMPK. Plays a protective role in the cellular response to oxidative stress. The protein is Adenylate kinase 4, mitochondrial of Homo sapiens (Human).